The primary structure comprises 640 residues: ETV5-related protein Ets96B (640 aa).

Residues H315–Q375 are disordered. Residues T321–H356 are a coiled coil. Positions A322–L355 are enriched in low complexity. Residues H356 to H369 show a composition bias toward basic residues. The segment at residues L498 to V579 is a DNA-binding region (ETS). The span at L609–P624 shows a compositional bias: polar residues. The segment at L609–K628 is disordered.

It belongs to the ETS family. In the adult brain, expressed almost exclusively in dopaminergic neurons.

It is found in the nucleus. Required in dopaminergic neurons to regulate expression of genes involved in dopamine signaling. Decreases expression of the dopamine transporter DAT and increases expression of the dopamine transporter Vmat and the tyrosine 3-monooxygenase ple which is involved in dopamine biosynthesis. Also involved in negatively regulating the expression of a group of endoplasmic reticulum proteins, the molecular chaperone Calr and the protein disulfide isomerases CaBP1 and ERp60. The chain is ETV5-related protein Ets96B from Drosophila melanogaster (Fruit fly).